Here is a 241-residue protein sequence, read N- to C-terminus: Co-chaperone protein p23-1 (241 aa).

A CS domain is found at 2 to 91; the sequence is SRHPEVKWAE…AEPERWNKLL (90 aa). MGG repeat units lie at residues 129 to 131, 132 to 134, 135 to 137, 138 to 140, 141 to 143, 144 to 146, 147 to 149, 150 to 152, 162 to 164, 165 to 167, 168 to 170, 171 to 173, 180 to 182, 183 to 185, 186 to 188, 189 to 191, and 192 to 194; these read MGG. Positions 129–194 are 17 X 3 AA repeats of M-G-G; the sequence is MGGMGGMGGM…GMGGMGGMGG (66 aa). The interval 188 to 241 is disordered; the sequence is GMGGMGGMEEFEDSDDEEETAKSGDKKDDAVKEEGLATEKAPAAEETTSVKEDK. A compositionally biased stretch (acidic residues) spans 196-206; the sequence is EEFEDSDDEEE. Basic and acidic residues predominate over residues 207-224; that stretch reads TAKSGDKKDDAVKEEGLA. Residues 225–234 show a composition bias toward low complexity; the sequence is TEKAPAAEET.

The protein belongs to the p23/wos2 family. As to quaternary structure, interacts with HSP90 in an ATP-dependent manner. Interacts with HSP90-5, HSP90-6 and HSP90-7. Widely expressed but preferentially in the root meristem.

It localises to the cytoplasm. The protein localises to the nucleus. Its function is as follows. Acts as a co-chaperone for HSP90. Controls root development through the modulation of auxin distribution in the root meristem. This is Co-chaperone protein p23-1 from Arabidopsis thaliana (Mouse-ear cress).